Here is a 574-residue protein sequence, read N- to C-terminus: Hyaluronan synthase 3 (574 aa).

Residues M1–S15 lie on the Cytoplasmic side of the membrane. Residues L16–I36 form a helical membrane-spanning segment. Residues H37–S44 lie on the Extracellular side of the membrane. Residues F45–L65 form a helical membrane-spanning segment. The Cytoplasmic segment spans residues E66–L398. A helical transmembrane segment spans residues W399 to I419. The Extracellular segment spans residues Q420–N429. A helical membrane pass occupies residues I430–F450. Topologically, residues L451–E456 are cytoplasmic. The helical transmembrane segment at M457 to F477 threads the bilayer. The Extracellular portion of the chain corresponds to A478–T494. A helical membrane pass occupies residues I495–G515. At L516–E530 the chain is on the cytoplasmic side. A helical membrane pass occupies residues V531–L551. Over Y552 to V574 the chain is Extracellular.

The protein belongs to the NodC/HAS family. The cofactor is Mg(2+). O-GlcNAcylation increases the hyaluronan synthase activity, HAS3 stability and its plasma membrane residence. The concentration of UDP-GlcNAc controls the level of O-GlcNAc modification.

The protein resides in the cell membrane. It is found in the golgi apparatus membrane. The protein localises to the golgi apparatus. Its subcellular location is the trans-Golgi network membrane. It localises to the cytoplasmic vesicle. It catalyses the reaction [hyaluronan](n) + UDP-N-acetyl-alpha-D-glucosamine = N-acetyl-beta-D-glucosaminyl-(1-&gt;4)-[hyaluronan](n) + UDP + H(+). The catalysed reaction is N-acetyl-beta-D-glucosaminyl-(1-&gt;4)-[hyaluronan](n) + UDP-alpha-D-glucuronate = [hyaluronan](n+1) + UDP + H(+). Its pathway is glycan biosynthesis; hyaluronan biosynthesis. Functionally, catalyzes the addition of GlcNAc or GlcUA monosaccharides to the nascent hyaluronan polymer. Therefore, it is essential to hyaluronan synthesis a major component of most extracellular matrices that has a structural role in tissues architectures and regulates cell adhesion, migration and differentiation. This is one of three isoenzymes responsible for cellular hyaluronan synthesis. In Gallus gallus (Chicken), this protein is Hyaluronan synthase 3 (HAS3).